Reading from the N-terminus, the 128-residue chain is Ribonuclease pancreatic (128 aa).

Positions 1–15 (SESSAKKFERQHMDS) are enriched in basic and acidic residues. The interval 1 to 28 (SESSAKKFERQHMDSRGSPSTNPNYCNE) is disordered. The substrate site is built by lysine 7 and arginine 10. The Proton acceptor role is filled by histidine 12. 4 cysteine pairs are disulfide-bonded: cysteine 26–cysteine 84, cysteine 40–cysteine 95, cysteine 58–cysteine 110, and cysteine 65–cysteine 72. Residue asparagine 34 is glycosylated (N-linked (GlcNAc...) asparagine). Residues 41–45 (KPVNT), lysine 66, and arginine 85 contribute to the substrate site. Catalysis depends on histidine 119, which acts as the Proton donor.

It belongs to the pancreatic ribonuclease family. Monomer. Interacts with and forms tight 1:1 complexes with RNH1. Dimerization of two such complexes may occur. Interaction with RNH1 inhibits this protein. As to expression, pancreas.

It is found in the secreted. It catalyses the reaction an [RNA] containing cytidine + H2O = an [RNA]-3'-cytidine-3'-phosphate + a 5'-hydroxy-ribonucleotide-3'-[RNA].. The enzyme catalyses an [RNA] containing uridine + H2O = an [RNA]-3'-uridine-3'-phosphate + a 5'-hydroxy-ribonucleotide-3'-[RNA].. Functionally, endonuclease that catalyzes the cleavage of RNA on the 3' side of pyrimidine nucleotides. Acts on single-stranded and double-stranded RNA. This Myocastor coypus (Coypu) protein is Ribonuclease pancreatic (RNASE1).